We begin with the raw amino-acid sequence, 341 residues long: MVTDQGDRASEADGGPVRHIPVMLAEVLAALEPAPGKVILDGTFGAGGYTSAILDAGADVIALDRDPTAIAAGQPMVAAAGGRLRLIHSRFSELADHVPEGGLDGIVFDIGVSSMQIDEAERGFSFQKKGPLDMRMSAAGVSAADVVNRAKVSDLIRIFGFLGEEKQAGRIARAIEKRRAEAPFETTRNLANLIETVTPRKAKDKIHPATRVFQALRIFVNDELGELANALFAAERVLKPGGRLVVVTFHSLEDRIVKTFFQDRSGKAGGSRHLPLVTARDATFTPVGKPMVAASEDEASRNPRARSAKLRAGVRTPAASPGNDLSIFNLPELASLARLGG.

Residues 47-49 (GGY), D64, F91, D109, and Q116 contribute to the S-adenosyl-L-methionine site. Residues 292–318 (VAASEDEASRNPRARSAKLRAGVRTPA) are disordered.

This sequence belongs to the methyltransferase superfamily. RsmH family.

The protein resides in the cytoplasm. It catalyses the reaction cytidine(1402) in 16S rRNA + S-adenosyl-L-methionine = N(4)-methylcytidine(1402) in 16S rRNA + S-adenosyl-L-homocysteine + H(+). Specifically methylates the N4 position of cytidine in position 1402 (C1402) of 16S rRNA. The sequence is that of Ribosomal RNA small subunit methyltransferase H from Sinorhizobium fredii (strain NBRC 101917 / NGR234).